Reading from the N-terminus, the 184-residue chain is Cysteine-rich atrial secretory protein (184 aa).

A signal peptide spans 1–26 (MATFQAHFFAAVMCVGVLGLSKLCGA). Disulfide bonds link Cys-29/Cys-34, Cys-65/Cys-111, Cys-75/Cys-82, Cys-123/Cys-155, and Cys-135/Cys-144. Residue Asn-74 is glycosylated (N-linked (GlcNAc...) asparagine).

Post-translationally, N-glycosylated. As to expression, highly expressed in atrium. Moderately expressed in the pericardium, pulmonary vein, nephridium, arteria anterior, ovotestis and connective tissue. Low expression found in intestine, lung plexus, diaphragm, subesophageal ganglion, ventricle and digestive gland. Very low expression found in columellar retractor, pedal nerves and cerebral ganglion. Not expressed in hemocytes.

The protein localises to the secreted. The protein is Cysteine-rich atrial secretory protein of Achatina achatina (Giant Ghana snail).